The following is a 249-amino-acid chain: Triosephosphate isomerase (249 aa).

Asn-9–Lys-11 contributes to the substrate binding site. The Electrophile role is filled by His-95. Glu-166 serves as the catalytic Proton acceptor. Substrate is bound by residues Gly-172, Ser-211, and Gly-232–Gly-233.

This sequence belongs to the triosephosphate isomerase family. Homodimer.

It is found in the cytoplasm. The catalysed reaction is D-glyceraldehyde 3-phosphate = dihydroxyacetone phosphate. The protein operates within carbohydrate biosynthesis; gluconeogenesis. It functions in the pathway carbohydrate degradation; glycolysis; D-glyceraldehyde 3-phosphate from glycerone phosphate: step 1/1. Involved in the gluconeogenesis. Catalyzes stereospecifically the conversion of dihydroxyacetone phosphate (DHAP) to D-glyceraldehyde-3-phosphate (G3P). The polypeptide is Triosephosphate isomerase (Legionella pneumophila (strain Paris)).